Here is a 470-residue protein sequence, read N- to C-terminus: Pyruvate kinase I (470 aa).

A substrate-binding site is contributed by Arg-32. K(+)-binding residues include Asn-34, Ser-36, Asp-66, and Thr-67. 34 to 37 (NFSH) lines the ATP pocket. Arg-73 and Lys-156 together coordinate ATP. Glu-222 is a binding site for Mg(2+). Residues Gly-245, Asp-246, and Thr-278 each coordinate substrate. Asp-246 contributes to the Mg(2+) binding site.

This sequence belongs to the pyruvate kinase family. In terms of assembly, homotetramer. It depends on Mg(2+) as a cofactor. K(+) serves as cofactor.

It catalyses the reaction pyruvate + ATP = phosphoenolpyruvate + ADP + H(+). Its pathway is carbohydrate degradation; glycolysis; pyruvate from D-glyceraldehyde 3-phosphate: step 5/5. The polypeptide is Pyruvate kinase I (pykF) (Salmonella typhi).